Reading from the N-terminus, the 146-residue chain is Hemoglobin subunit beta (146 aa).

Valine 1 carries the N-acetylvaline modification. The Globin domain occupies 2 to 146 (HLTGEEKSAV…VATALAHKYH (145 aa)). At threonine 12 the chain carries Phosphothreonine. Phosphoserine is present on serine 44. Residue histidine 63 coordinates heme b. Lysine 82 carries the post-translational modification N6-acetyllysine. Heme b is bound at residue histidine 92. Residue cysteine 93 is modified to S-nitrosocysteine. An N6-acetyllysine modification is found at lysine 144.

This sequence belongs to the globin family. As to quaternary structure, heterotetramer of two alpha chains and two beta chains. As to expression, red blood cells.

Its function is as follows. Involved in oxygen transport from the lung to the various peripheral tissues. This Tursiops truncatus (Atlantic bottle-nosed dolphin) protein is Hemoglobin subunit beta (HBB).